We begin with the raw amino-acid sequence, 185 residues long: Acireductone dioxygenase (185 aa).

The interval 1–22 (MSRLSIHPEGSTNATSPAEPLL) is disordered. 4 residues coordinate Fe(2+): His-102, His-104, Glu-108, and His-146. Residues His-102, His-104, Glu-108, and His-146 each contribute to the Ni(2+) site.

This sequence belongs to the acireductone dioxygenase (ARD) family. As to quaternary structure, monomer. Fe(2+) is required as a cofactor. Ni(2+) serves as cofactor.

The catalysed reaction is 1,2-dihydroxy-5-(methylsulfanyl)pent-1-en-3-one + O2 = 3-(methylsulfanyl)propanoate + CO + formate + 2 H(+). The enzyme catalyses 1,2-dihydroxy-5-(methylsulfanyl)pent-1-en-3-one + O2 = 4-methylsulfanyl-2-oxobutanoate + formate + 2 H(+). It functions in the pathway amino-acid biosynthesis; L-methionine biosynthesis via salvage pathway; L-methionine from S-methyl-5-thio-alpha-D-ribose 1-phosphate: step 5/6. Catalyzes 2 different reactions between oxygen and the acireductone 1,2-dihydroxy-3-keto-5-methylthiopentene (DHK-MTPene) depending upon the metal bound in the active site. Fe-containing acireductone dioxygenase (Fe-ARD) produces formate and 2-keto-4-methylthiobutyrate (KMTB), the alpha-ketoacid precursor of methionine in the methionine recycle pathway. Ni-containing acireductone dioxygenase (Ni-ARD) produces methylthiopropionate, carbon monoxide and formate, and does not lie on the methionine recycle pathway. The polypeptide is Acireductone dioxygenase (Prochlorococcus marinus (strain MIT 9313)).